Here is a 98-residue protein sequence, read N- to C-terminus: Feather keratin 2 (98 aa).

Residue serine 2 is modified to N-acetylserine.

It belongs to the avian keratin family. In terms of assembly, the avian keratins (F-ker, S-ker, C-ker and B-ker) are a complex mixture of very similar polypeptides.

The protein is Feather keratin 2 of Gallus gallus (Chicken).